We begin with the raw amino-acid sequence, 476 residues long: 3-isopropylmalate dehydratase large subunit (476 aa).

Positions 357, 417, and 420 each coordinate [4Fe-4S] cluster.

This sequence belongs to the aconitase/IPM isomerase family. LeuC type 1 subfamily. As to quaternary structure, heterodimer of LeuC and LeuD. [4Fe-4S] cluster is required as a cofactor.

It catalyses the reaction (2R,3S)-3-isopropylmalate = (2S)-2-isopropylmalate. It functions in the pathway amino-acid biosynthesis; L-leucine biosynthesis; L-leucine from 3-methyl-2-oxobutanoate: step 2/4. In terms of biological role, catalyzes the isomerization between 2-isopropylmalate and 3-isopropylmalate, via the formation of 2-isopropylmaleate. This Mycobacterium avium (strain 104) protein is 3-isopropylmalate dehydratase large subunit.